Here is a 185-residue protein sequence, read N- to C-terminus: Large ribosomal subunit protein uL5 (185 aa).

It belongs to the universal ribosomal protein uL5 family. Part of the 50S ribosomal subunit; part of the 5S rRNA/L5/L18/L25 subcomplex. Contacts the 5S rRNA and the P site tRNA. Forms a bridge to the 30S subunit in the 70S ribosome.

Functionally, this is one of the proteins that bind and probably mediate the attachment of the 5S RNA into the large ribosomal subunit, where it forms part of the central protuberance. In the 70S ribosome it contacts protein S13 of the 30S subunit (bridge B1b), connecting the 2 subunits; this bridge is implicated in subunit movement. Contacts the P site tRNA; the 5S rRNA and some of its associated proteins might help stabilize positioning of ribosome-bound tRNAs. The protein is Large ribosomal subunit protein uL5 of Parabacteroides distasonis (strain ATCC 8503 / DSM 20701 / CIP 104284 / JCM 5825 / NCTC 11152).